We begin with the raw amino-acid sequence, 430 residues long: N-lysine methyltransferase SMYD2-B (430 aa).

Positions 5–239 (EGLERFDSPG…AGEEVFTSYI (235 aa)) constitute an SET domain. 15–17 (KGR) lines the S-adenosyl-L-methionine pocket. Zn(2+) contacts are provided by Cys-50, Cys-53, Cys-63, Cys-66, Cys-72, Cys-76, His-84, and Cys-88. The MYND-type zinc-finger motif lies at 50–88 (CDFCFTRKEGLSKCGKCKQAFYCNVDCQKGDWPMHKLEC). Residues His-135, 204–205 (NH), and 256–258 (YFF) each bind S-adenosyl-L-methionine.

Belongs to the class V-like SAM-binding methyltransferase superfamily.

It localises to the cytoplasm. The protein localises to the cytosol. The protein resides in the nucleus. The enzyme catalyses L-lysyl(4)-[histone H3] + 3 S-adenosyl-L-methionine = N(6),N(6),N(6)-trimethyl-L-lysyl(4)-[histone H3] + 3 S-adenosyl-L-homocysteine + 3 H(+). It catalyses the reaction L-lysyl-[protein] + S-adenosyl-L-methionine = N(6)-methyl-L-lysyl-[protein] + S-adenosyl-L-homocysteine + H(+). Protein-lysine N-methyltransferase that methylates both histones and non-histone proteins, including p53/TP53 and RB1. Specifically trimethylates histone H3 'Lys-4' (H3K4me3) in vivo. The activity requires interaction with HSP90alpha. Shows even higher methyltransferase activity on p53/TP53. Monomethylates 'Lys-370' of p53/TP53, leading to decreased DNA-binding activity and subsequent transcriptional regulation activity of p53/TP53. Monomethylates RB1 at 'Lys-860'. In Xenopus laevis (African clawed frog), this protein is N-lysine methyltransferase SMYD2-B (smyd2-b).